The sequence spans 179 residues: Adenine phosphoribosyltransferase (179 aa).

This sequence belongs to the purine/pyrimidine phosphoribosyltransferase family. Homodimer.

Its subcellular location is the cytoplasm. The catalysed reaction is AMP + diphosphate = 5-phospho-alpha-D-ribose 1-diphosphate + adenine. The protein operates within purine metabolism; AMP biosynthesis via salvage pathway; AMP from adenine: step 1/1. Catalyzes a salvage reaction resulting in the formation of AMP, that is energically less costly than de novo synthesis. The polypeptide is Adenine phosphoribosyltransferase (Mycolicibacterium gilvum (strain PYR-GCK) (Mycobacterium gilvum (strain PYR-GCK))).